Consider the following 931-residue polypeptide: 3'-5' exonuclease DinG (931 aa).

The Exonuclease domain maps to 7–162 (VVIDVETTGN…DSDAEVTGLI (156 aa)). In terms of domain architecture, Helicase ATP-binding spans 250–510 (LSELMPGYEK…KKMRQLFQRN (261 aa)). 284–291 (APPGIGKT) contacts ATP. The short motif at 462–465 (DEAH) is the DEAH box element. Residues 741 to 897 (DTARYIELMA…TIIILDRRIK (157 aa)) form the Helicase C-terminal domain.

The protein belongs to the helicase family. DinG subfamily. Type 2 sub-subfamily.

It localises to the cytoplasm. Functionally, 3'-5' exonuclease. The polypeptide is 3'-5' exonuclease DinG (Bacillus subtilis (strain 168)).